A 361-amino-acid chain; its full sequence is Nicotinate-nucleotide--dimethylbenzimidazole phosphoribosyltransferase (361 aa).

The active-site Proton acceptor is E314.

This sequence belongs to the CobT family.

It carries out the reaction 5,6-dimethylbenzimidazole + nicotinate beta-D-ribonucleotide = alpha-ribazole 5'-phosphate + nicotinate + H(+). It participates in nucleoside biosynthesis; alpha-ribazole biosynthesis; alpha-ribazole from 5,6-dimethylbenzimidazole: step 1/2. Functionally, catalyzes the synthesis of alpha-ribazole-5'-phosphate from nicotinate mononucleotide (NAMN) and 5,6-dimethylbenzimidazole (DMB). This Mycobacterium bovis (strain BCG / Pasteur 1173P2) protein is Nicotinate-nucleotide--dimethylbenzimidazole phosphoribosyltransferase.